The chain runs to 252 residues: 5'-nucleotidase SurE (252 aa).

Positions 8, 9, 39, and 91 each coordinate a divalent metal cation.

It belongs to the SurE nucleotidase family. A divalent metal cation is required as a cofactor.

Its subcellular location is the cytoplasm. The catalysed reaction is a ribonucleoside 5'-phosphate + H2O = a ribonucleoside + phosphate. Functionally, nucleotidase that shows phosphatase activity on nucleoside 5'-monophosphates. This is 5'-nucleotidase SurE from Bordetella bronchiseptica (strain ATCC BAA-588 / NCTC 13252 / RB50) (Alcaligenes bronchisepticus).